Reading from the N-terminus, the 342-residue chain is Tetraacyldisaccharide 4'-kinase (342 aa).

68–75 lines the ATP pocket; that stretch reads TVGGTGKT.

This sequence belongs to the LpxK family.

The enzyme catalyses a lipid A disaccharide + ATP = a lipid IVA + ADP + H(+). Its pathway is glycolipid biosynthesis; lipid IV(A) biosynthesis; lipid IV(A) from (3R)-3-hydroxytetradecanoyl-[acyl-carrier-protein] and UDP-N-acetyl-alpha-D-glucosamine: step 6/6. In terms of biological role, transfers the gamma-phosphate of ATP to the 4'-position of a tetraacyldisaccharide 1-phosphate intermediate (termed DS-1-P) to form tetraacyldisaccharide 1,4'-bis-phosphate (lipid IVA). The protein is Tetraacyldisaccharide 4'-kinase of Burkholderia thailandensis (strain ATCC 700388 / DSM 13276 / CCUG 48851 / CIP 106301 / E264).